A 700-amino-acid polypeptide reads, in one-letter code: Neoverrucotoxin subunit beta (700 aa).

Positions 506 to 700 (HMPGVETIKD…QKVNGQIKLL (195 aa)) constitute a B30.2/SPRY domain.

Belongs to the SNTX/VTX toxin family. As to quaternary structure, heterodimer of alpha and beta subunits. In terms of processing, not glycosylated. Four intrachain disulfide linkages are present in the heterodimer. No interchain disulfide bound links the two subunits. As to expression, expressed by the venom gland.

The protein localises to the secreted. Its function is as follows. Has hemolytic and lethal activities. Its hemolytic activity is inhibited by anionic lipids, especially potently by cardiolipin. In Synanceia verrucosa (Reef stonefish), this protein is Neoverrucotoxin subunit beta.